We begin with the raw amino-acid sequence, 473 residues long: Asparagine--tRNA ligase (473 aa).

Belongs to the class-II aminoacyl-tRNA synthetase family. As to quaternary structure, homodimer.

It localises to the cytoplasm. The catalysed reaction is tRNA(Asn) + L-asparagine + ATP = L-asparaginyl-tRNA(Asn) + AMP + diphosphate + H(+). This is Asparagine--tRNA ligase from Treponema denticola (strain ATCC 35405 / DSM 14222 / CIP 103919 / JCM 8153 / KCTC 15104).